The following is a 274-amino-acid chain: Coagulation factor IX (274 aa).

Tyr23 is subject to Sulfotyrosine. N-linked (GlcNAc...) asparagine glycosylation is present at Asn25. Ser26 carries the phosphoserine modification. Asn35 is a glycosylation site (N-linked (GlcNAc...) asparagine). An O-linked (GalNAc...) threonine glycan is attached at Thr37. N-linked (GlcNAc...) asparagine glycosylation is present at Asn40. Residues Val49–Val274 form the Peptidase S1 domain. A disulfide bridge connects residues Cys74 and Cys90. The active-site Charge relay system is the His89. Residues Glu103, Asn105, Glu110, and Glu113 each coordinate Ca(2+). Asn128 carries N-linked (GlcNAc...) asparagine glycosylation. Asp137 acts as the Charge relay system in catalysis. Disulfide bonds link Cys204-Cys218 and Cys229-Cys257. The active-site Charge relay system is Ser233.

This sequence belongs to the peptidase S1 family. Heterodimer of a light chain and a heavy chain; disulfide-linked. Interacts (inactive and activated) with F11 (activated) in calcium-dependent manner. Interacts with SERPINC1. Activated by factor XIa, which excises the activation peptide. The propeptide can also be removed by snake venom protease. Activated by coagulation factor VIIa-tissue factor (F7-F3) complex in calcium-dependent manner.

It is found in the secreted. The enzyme catalyses Selective cleavage of Arg-|-Ile bond in factor X to form factor Xa.. Functionally, factor IX is a vitamin K-dependent plasma protein that participates in the intrinsic pathway of blood coagulation by converting factor X to its active form in the presence of Ca(2+) ions, phospholipids, and factor VIIIa. This chain is Coagulation factor IX (F9), found in Ovis aries (Sheep).